The sequence spans 330 residues: G-protein coupled bile acid receptor 1 (330 aa).

The Extracellular portion of the chain corresponds to 1–19; sequence MTPNSTGEVPGPIPRGALE. A glycan (N-linked (GlcNAc...) asparagine) is linked at Asn4. A helical membrane pass occupies residues 20-40; sequence LSLALASLIIAANLLLALGIA. Over 41–50 the chain is Cytoplasmic; it reads CDRRLRSPPA. Residues 51–71 form a helical membrane-spanning segment; it reads GCFFLSLLLAGLLTGLALPTL. The Extracellular segment spans residues 72 to 85; sequence PGLWRQSHRGYWSC. Cys85 and Cys155 are joined by a disulfide. The helical transmembrane segment at 86–106 threads the bilayer; that stretch reads LLVYLAPNFSFLSLLANLLLV. Residues 107–125 are Cytoplasmic-facing; it reads HGERYVAVLRPLQPPGSIR. A helical transmembrane segment spans residues 126–146; sequence LALLLTWTGPLLFASLPALGW. At 147–169 the chain is on the extracellular side; sequence NHWGPEANCSSQTIFPAPYLYLE. An N-linked (GlcNAc...) asparagine glycan is attached at Asn154. Residues 170–190 form a helical membrane-spanning segment; sequence VYGLLLPAVGAAALLSAHVLL. Residues 191–230 are Cytoplasmic-facing; that stretch reads AAHRQLQDIRRLERAVCRDAPSALARALTWRQARAQAGAT. Residues 231 to 251 form a helical membrane-spanning segment; it reads LLFGLCWGPYVATLFLSVLAY. The Extracellular portion of the chain corresponds to 252–261; sequence EQRPPLGPGT. Residues 262 to 282 form a helical membrane-spanning segment; it reads LLSLLSLGSASAAAVPVAMGL. The Cytoplasmic portion of the chain corresponds to 283–330; it reads GDHRYTAPWRAAARRWLRGLRGRGSQASPGPSTAYHTSSQSSVDVDLN. The disordered stretch occupies residues 304–330; that stretch reads GRGSQASPGPSTAYHTSSQSSVDVDLN. Polar residues predominate over residues 307–330; sequence SQASPGPSTAYHTSSQSSVDVDLN.

The protein belongs to the G-protein coupled receptor 1 family. In terms of tissue distribution, expressed at high level in spleen. Expressed at lower level in thymus, heart, lung, liver, kidney, ileum, blood and adherent alveolar macrophage cells.

It is found in the cell membrane. Functionally, receptor for bile acid. Bile-acid binding induces its internalization, activation of extracellular signal-regulated kinase and intracellular cAMP production. May be involved in the suppression of macrophage functions by bile acids. Involved in bile acid promoted GLP1R secretion. The chain is G-protein coupled bile acid receptor 1 (GPBAR1) from Oryctolagus cuniculus (Rabbit).